We begin with the raw amino-acid sequence, 435 residues long: UPF0597 protein AHA_4077 (435 aa).

Belongs to the UPF0597 family.

The protein is UPF0597 protein AHA_4077 of Aeromonas hydrophila subsp. hydrophila (strain ATCC 7966 / DSM 30187 / BCRC 13018 / CCUG 14551 / JCM 1027 / KCTC 2358 / NCIMB 9240 / NCTC 8049).